We begin with the raw amino-acid sequence, 97 residues long: Large ribosomal subunit protein bL36m (97 aa).

It belongs to the bacterial ribosomal protein bL36 family. As to quaternary structure, component of the mitochondrial ribosome large subunit (39S) which comprises a 16S rRNA and about 50 distinct proteins.

The protein resides in the mitochondrion. This chain is Large ribosomal subunit protein bL36m (Mrpl36), found in Rattus norvegicus (Rat).